A 246-amino-acid polypeptide reads, in one-letter code: Protein YIPF4 (246 aa).

Topologically, residues 1–115 (MQPPGPPPAY…FNRQVVRDNP (115 aa)) are cytoplasmic. The helical transmembrane segment at 116–136 (DFWGPLAVVLFFSMISLYGQF) threads the bilayer. The Lumenal segment spans residues 137 to 140 (RVVS). The chain crosses the membrane as a helical span at residues 141 to 161 (WIITIWIFGSLTIFLLARVLG). The Cytoplasmic portion of the chain corresponds to 162-168 (GEVAYGQ). The chain crosses the membrane as a helical span at residues 169–189 (VLGVIGYSLLPLIVIAPILLV). The Lumenal segment spans residues 190–197 (VGSFEMVS). The helical transmembrane segment at 198 to 218 (TLIKLFGVFWAAYSAASLLVG) threads the bilayer. The Cytoplasmic portion of the chain corresponds to 219–225 (EEFKTKK). The helical transmembrane segment at 226–246 (PLLIYPIFLLYIYFLSLYTGV) threads the bilayer.

Belongs to the YIP1 family. As to quaternary structure, interacts with YIPF3 and YIPF5.

The protein resides in the golgi apparatus. It localises to the cis-Golgi network membrane. In terms of biological role, involved in the maintenance of the Golgi structure. The protein is Protein YIPF4 (Yipf4) of Mus musculus (Mouse).